A 197-amino-acid chain; its full sequence is Alkyl hydroperoxide reductase C (197 aa).

One can recognise a Thioredoxin domain in the interval 2–163 (VLVTQNAPNF…MIRMVDALDF (162 aa)). C50 (cysteine sulfenic acid (-SOH) intermediate) is an active-site residue.

The protein belongs to the peroxiredoxin family. AhpC/Prx1 subfamily. In terms of assembly, homodimer; disulfide-linked, upon oxidation. 5 homodimers assemble to form a ring-like decamer.

The protein localises to the cytoplasm. It carries out the reaction a hydroperoxide + NADH + H(+) = an alcohol + NAD(+) + H2O. Its function is as follows. Thiol-specific peroxidase that catalyzes the reduction of hydrogen peroxide and organic hydroperoxides to water and alcohols, respectively. Plays a role in cell protection against oxidative stress by detoxifying peroxides. The chain is Alkyl hydroperoxide reductase C from Buchnera aphidicola subsp. Acyrthosiphon pisum (strain APS) (Acyrthosiphon pisum symbiotic bacterium).